A 65-amino-acid polypeptide reads, in one-letter code: Large ribosomal subunit protein bL35 (65 aa).

The segment at 1-22 is disordered; sequence MPKIKTVRGAAKRFKKTGSGGF. Positions 10 to 22 are enriched in basic residues; sequence AAKRFKKTGSGGF.

The protein belongs to the bacterial ribosomal protein bL35 family.

In Serratia proteamaculans (strain 568), this protein is Large ribosomal subunit protein bL35.